The primary structure comprises 367 residues: High osmolarity signaling protein SHO1 (367 aa).

The Cytoplasmic segment spans residues 1–32 (MSISSKIRPTPRKPSRMATDHSFKMKKFYADP). The chain crosses the membrane as a helical span at residues 33–53 (FAISSISLAIVSWVIAIGGSI). Residues 54–65 (SSASTNESFPRF) are Extracellular-facing. The N-linked (GlcNAc...) asparagine glycan is linked to N59. A helical membrane pass occupies residues 66–86 (TWWGIVYQFLIICSLMLFYCF). At 87–93 (DLVDHYR) the chain is on the cytoplasmic side. A helical transmembrane segment spans residues 94 to 114 (IFITTSIAVAFVYNTNSATNL). Topologically, residues 115–122 (VYADGPKK) are extracellular. Residues 123–143 (AAASAGVILLSIINLIWILYY) form a helical membrane-spanning segment. Topologically, residues 144–367 (GGDNASPTNR…LIDGPEEMHR (224 aa)) are cytoplasmic. Phosphoserine is present on S166. The segment at 252–276 (SNAKETNDNSNNQTNTNIGNTFDTD) is disordered. Residues 259-272 (DNSNNQTNTNIGNT) are compositionally biased toward low complexity. Residues 300-361 (NFIYKAKALY…PSNYVQLIDG (62 aa)) enclose the SH3 domain.

It belongs to the SHO1 family. Forms homooligomers. Interacts (via the SH3 domain) with PBS2. Interacts with FUS1, STE11, STE50 and RNA polymerase II.

The protein resides in the cell membrane. Its subcellular location is the bud. It localises to the bud neck. It is found in the cell projection. Plasma membrane osmosensor that activates the high osmolarity glycerol (HOG) MAPK signaling pathway in response to high osmolarity. Detects changes in external osmolarity and activates PBS2 through the stimulation of STE11 and targets PBS2 to the plasma membrane. PBS2 activation leads to changes in glycerol production that helps to balance the intracellular and external osmotic pressures. Activates also HOG1 in response to heat stress and mediates resistance to oxidative stress. Involved in the regulation of the mating pathway. May be a receptor that feeds into the pseudohyphal growth pathway. The sequence is that of High osmolarity signaling protein SHO1 (SHO1) from Saccharomyces cerevisiae (strain ATCC 204508 / S288c) (Baker's yeast).